Reading from the N-terminus, the 171-residue chain is S-ribosylhomocysteine lyase (171 aa).

Residues H54, H58, and C128 each contribute to the Fe cation site.

Belongs to the LuxS family. Homodimer. The cofactor is Fe cation.

It catalyses the reaction S-(5-deoxy-D-ribos-5-yl)-L-homocysteine = (S)-4,5-dihydroxypentane-2,3-dione + L-homocysteine. Functionally, involved in the synthesis of autoinducer 2 (AI-2) which is secreted by bacteria and is used to communicate both the cell density and the metabolic potential of the environment. The regulation of gene expression in response to changes in cell density is called quorum sensing. Catalyzes the transformation of S-ribosylhomocysteine (RHC) to homocysteine (HC) and 4,5-dihydroxy-2,3-pentadione (DPD). The chain is S-ribosylhomocysteine lyase from Campylobacter curvus (strain 525.92).